We begin with the raw amino-acid sequence, 132 residues long: Peptide methionine sulfoxide reductase MsrB (132 aa).

Residues 8 to 130 (LDSWREELTE…NSASLKLVPR (123 aa)) form the MsrB domain. Cys-47, Cys-50, Cys-96, and Cys-99 together coordinate Zn(2+). Cys-119 acts as the Nucleophile in catalysis.

Belongs to the MsrB Met sulfoxide reductase family. Requires Zn(2+) as cofactor.

The enzyme catalyses L-methionyl-[protein] + [thioredoxin]-disulfide + H2O = L-methionyl-(R)-S-oxide-[protein] + [thioredoxin]-dithiol. The chain is Peptide methionine sulfoxide reductase MsrB from Pseudomonas aeruginosa (strain UCBPP-PA14).